Consider the following 391-residue polypeptide: Solute carrier family 35 member F2 (391 aa).

10 helical membrane-spanning segments follow: residues M39–T59, L73–V93, W108–A128, I137–L157, F165–M185, L200–Q220, V230–I250, L267–I287, A294–F314, and F318–S338. Residues V361–A391 form a disordered region. The segment covering S365 to Q380 has biased composition (polar residues).

It belongs to the SLC35F solute transporter family.

It localises to the membrane. Its function is as follows. Putative solute transporter. This is Solute carrier family 35 member F2 (slc35f2) from Xenopus tropicalis (Western clawed frog).